Reading from the N-terminus, the 592-residue chain is Guanylate-binding protein 1 (592 aa).

The GTPase domain (Globular) stretch occupies residues 1–311; that stretch reads MASEIHMTGP…NAISSGDLPC (311 aa). Positions 35 to 278 constitute a GB1/RHD3-type G domain; that stretch reads TQPMVVVAIV…FCSYIFSNSK (244 aa). GTP contacts are provided by residues 45 to 52, 67 to 69, and 97 to 101; these read GLYRTGKS, LGS, and DTEGL. Position 156 is a phosphoserine (serine 156). Position 589 is a cysteine methyl ester (cysteine 589). Cysteine 589 is lipidated: S-farnesyl cysteine. Phosphothreonine is present on threonine 590. A propeptide spans 590-592 (removed in mature form); sequence TIS.

This sequence belongs to the TRAFAC class dynamin-like GTPase superfamily. GB1/RHD3 GTPase family. GB1 subfamily. In terms of assembly, homodimer; homodimerization occurs upon GTP-binding and is required for the second hydrolysis step from GDP to GMP. Undergoes conformational changes and oligomerization upon GTP-binding and hydrolysis. Heterodimer with other family members, including GBP2, GBP3, GBP4 and GBP5. Dimerization regulates subcellular location to membranous structures. Interacts with SQSTM1. Interacts (when phosphorylated) with 14-3-3 protein sigma (SFN); leading to GBP1 retention in the cytosol and inactivation. Post-translationally, isoprenylation is required for proper subcellular location. Phosphorylated at Ser-156 by PIM1 in absence of infection, inhibits GBP1: phosphorylation promotes interaction with 14-3-3 protein sigma (SFN), leading to GBP1 retention in the cytosol. Dephosphorylated in response to infection, liberating GBP1.

The protein localises to the cytoplasmic vesicle membrane. It is found in the golgi apparatus membrane. The protein resides in the cell membrane. It localises to the cytoplasm. Its subcellular location is the cytosol. The protein localises to the secreted. The enzyme catalyses GTP + H2O = GDP + phosphate + H(+). It carries out the reaction GDP + H2O = GMP + phosphate + H(+). In terms of biological role, interferon (IFN)-inducible GTPase that plays important roles in innate immunity against a diverse range of bacterial, viral and protozoan pathogens. Hydrolyzes GTP to GMP in two consecutive cleavage reactions: GTP is first hydrolyzed to GDP and then to GMP in a processive manner. Following infection, recruited to the pathogen-containing vacuoles or vacuole-escaped bacteria and promotes both inflammasome assembly and autophagy. Acts as a positive regulator of inflammasome assembly by facilitating the detection of inflammasome ligands from pathogens. Involved in the lysis of pathogen-containing vacuoles, releasing pathogens into the cytosol. Following pathogen release in the cytosol, forms a protein coat in a GTPase-dependent manner that encapsulates pathogens and promotes the detection of ligands by pattern recognition receptors. Plays a key role in inflammasome assembly in response to infection by Gram-negative bacteria: following pathogen release in the cytosol, forms a protein coat that encapsulates Gram-negative bacteria and directly binds to lipopolysaccharide (LPS), disrupting the O-antigen barrier and unmasking lipid A that is that detected by the non-canonical inflammasome effector CASP4/CASP11. Also promotes recruitment of proteins that mediate bacterial cytolysis, leading to release double-stranded DNA (dsDNA) that activates the AIM2 inflammasome. Involved in autophagy by regulating bacteriolytic peptide generation via its interaction with ubiquitin-binding protein SQSTM1, which delivers monoubiquitinated proteins to autolysosomes for the generation of bacteriolytic peptides. Confers protection to several pathogens, including the bacterial pathogens L.monocytogenes and M.bovis BCG as well as the protozoan pathogen T.gondii. Exhibits antiviral activity against influenza virus. This chain is Guanylate-binding protein 1 (GBP1), found in Pongo abelii (Sumatran orangutan).